The sequence spans 576 residues: 4-alpha-glucanotransferase, chloroplastic/amyloplastic (576 aa).

Residues Met-1 to Ala-52 constitute a chloroplast transit peptide.

It belongs to the disproportionating enzyme family. As to expression, present in leaves, stems, roots, and stolons but is most abundant in developing and mature tubers.

It is found in the plastid. The protein resides in the chloroplast. It localises to the amyloplast. It carries out the reaction Transfers a segment of a (1-&gt;4)-alpha-D-glucan to a new position in an acceptor, which may be glucose or a (1-&gt;4)-alpha-D-glucan.. May act during starch breakdown to convert small oligosaccharides into larger molecules upon which starch phosphorylase can act, or may change the structure of starch molecules and grain architecture by modifying chain length, or may generate from starch and glucose oligosaccharides which can serve either as primers for new starch phosphoenzyme. The polypeptide is 4-alpha-glucanotransferase, chloroplastic/amyloplastic (DPEP) (Solanum tuberosum (Potato)).